Reading from the N-terminus, the 299-residue chain is tRNA pseudouridine synthase B (299 aa).

The active-site Nucleophile is the Asp38.

It belongs to the pseudouridine synthase TruB family. Type 1 subfamily.

It carries out the reaction uridine(55) in tRNA = pseudouridine(55) in tRNA. Its function is as follows. Responsible for synthesis of pseudouridine from uracil-55 in the psi GC loop of transfer RNAs. In Pediococcus pentosaceus (strain ATCC 25745 / CCUG 21536 / LMG 10740 / 183-1w), this protein is tRNA pseudouridine synthase B.